We begin with the raw amino-acid sequence, 281 residues long: Ermin (281 aa).

Polar residues-rich tracts occupy residues 1 to 12 (MTDTPETLSGTE), 21 to 31 (NGQQPSSQTRQ), and 135 to 147 (AQQQLEQRGDAST). Disordered regions lie at residues 1–80 (MTDT…KILN), 110–147 (REGHPWKKIPPNSSNLEVSRQKERTAQQQLEQRGDAST), and 167–248 (KCDE…GDIA). Residues 169–197 (DEEEEEEEEVWNEEINEEDVDECAEEEDE) show a composition bias toward acidic residues. Residues 198–223 (VRVIEFKRKHREGSPLKEESLAREDS) show a composition bias toward basic and acidic residues. 4 positions are modified to phosphoserine: serine 211, serine 223, serine 227, and serine 230. Threonine 234 carries the phosphothreonine modification. The tract at residues 262-281 (KIRKGNTKQRIDEFESMMHL) is binds actin.

As to quaternary structure, binds actin. In terms of tissue distribution, brain and spinal cord. Exclusively expressed by the oligodendrocytes. Appears at a late stage during myelination, and in the mature nerves, it is localized to the outer cytoplasmic lip of the myelin sheath and the paranodal loops.

It localises to the cytoplasm. Its subcellular location is the cytoskeleton. In terms of biological role, plays a role in cytoskeletal rearrangements during the late wrapping and/or compaction phases of myelinogenesis as well as in maintenance and stability of myelin sheath in the adult. May play an important role in late-stage oligodendroglia maturation, myelin/Ranvier node formation during CNS development, and in the maintenance and plasticity of related structures in the mature CNS. The polypeptide is Ermin (Ermn) (Mus musculus (Mouse)).